Reading from the N-terminus, the 116-residue chain is Neuropeptide Y receptor type 1 (116 aa).

Residues 1 to 6 form a helical membrane-spanning segment; that stretch reads LVLIAV. Residues 7 to 24 are Cytoplasmic-facing; the sequence is ERHQLIINPRGWRPSNRH. Residues 25 to 45 form a helical membrane-spanning segment; that stretch reads AYVGIAVIWVLAVASSLPFLI. The Extracellular portion of the chain corresponds to 46-81; it reads YQVLTDEPFQNVTLDAFKDKYVCFDKFPSDSHRLSY. N-linked (GlcNAc...) asparagine glycosylation occurs at Asn-56. A helical transmembrane segment spans residues 82–102; the sequence is TTLLLVLQYFGPLCFIFICYF. At 103 to 116 the chain is on the cytoplasmic side; the sequence is KIYIRLKRRNNMMD.

It belongs to the G-protein coupled receptor 1 family.

The protein resides in the cell membrane. Its function is as follows. Receptor for neuropeptide Y and peptide YY. In Ovis aries (Sheep), this protein is Neuropeptide Y receptor type 1 (NPY1R).